Here is a 305-residue protein sequence, read N- to C-terminus: Serine/threonine-protein phosphatase 6 catalytic subunit (305 aa).

Residues Asp54, His56, Asp82, and Asn114 each coordinate Mn(2+). The active-site Proton donor is His115. Residues His164 and His238 each contribute to the Mn(2+) site.

Belongs to the PPP phosphatase family. PP-6 (PP-V) subfamily. Mn(2+) is required as a cofactor.

It catalyses the reaction O-phospho-L-seryl-[protein] + H2O = L-seryl-[protein] + phosphate. It carries out the reaction O-phospho-L-threonyl-[protein] + H2O = L-threonyl-[protein] + phosphate. This Dictyostelium discoideum (Social amoeba) protein is Serine/threonine-protein phosphatase 6 catalytic subunit (ppp6c).